A 192-amino-acid polypeptide reads, in one-letter code: Thymidine kinase (192 aa).

ATP contacts are provided by residues 9–16 (SAMNAGKS) and 87–90 (DECQ). The active-site Proton acceptor is glutamate 88. Zn(2+)-binding residues include cysteine 145, cysteine 147, cysteine 182, and histidine 185.

This sequence belongs to the thymidine kinase family. As to quaternary structure, homotetramer.

The protein resides in the cytoplasm. The catalysed reaction is thymidine + ATP = dTMP + ADP + H(+). The protein is Thymidine kinase of Photobacterium profundum (strain SS9).